A 584-amino-acid chain; its full sequence is Gag-Pro polyprotein (584 aa).

Gly-2 is lipidated: N-myristoyl glycine; by host. A disordered region spans residues 93-117 (AREAPPSAPPADDPQKPPPYPEHAQ). The PTAP/PSAP motif motif lies at 98-101 (PSAP). Positions 98-113 (PSAPPADDPQKPPPYP) are enriched in pro residues. A PPXY motif motif is present at residues 109 to 112 (PPPY). 2 consecutive CCHC-type zinc fingers follow at residues 349 to 366 (QPCF…DCKQ) and 372 to 389 (GPCP…DCPQ). The 79-residue stretch at 457–535 (VQALLDTGAD…DQWTILGRDA (79 aa)) folds into the Peptidase A2 domain. Asp-462 functions as the For protease activity; shared with dimeric partner in the catalytic mechanism. The interval 564–584 (EHLPPPPEVSQFPLNRSASRP) is disordered. Positions 575–584 (FPLNRSASRP) are enriched in polar residues.

As to quaternary structure, interacts with human TSG101. This interaction is essential for budding and release of viral particles. Post-translationally, specific enzymatic cleavages by the viral protease yield mature proteins. The polyprotein is cleaved during and after budding, this process is termed maturation. The protease is autoproteolytically processed at its N- and C-termini.

The protein localises to the virion. Its function is as follows. Matrix protein p19 targets Gag, Gag-Pro and Gag-Pro-Pol polyproteins to the plasma membrane via a multipartite membrane binding signal, that includes its myristoylated N-terminus. Also mediates nuclear localization of the preintegration complex. Functionally, capsid protein p24 forms the conical core of the virus that encapsulates the genomic RNA-nucleocapsid complex. In terms of biological role, nucleocapsid protein p15 is involved in the packaging and encapsidation of two copies of the genome. The aspartyl protease mediates proteolytic cleavages of Gag, Gag-Pro and Gag-Pro-Pol polyproteins during or shortly after the release of the virion from the plasma membrane. Cleavages take place as an ordered, step-wise cascade to yield mature proteins. This process is called maturation. Displays maximal activity during the budding process just prior to particle release from the cell. Hydrolyzes host EIF4GI in order to shut off the capped cellular mRNA translation. The resulting inhibition of cellular protein synthesis serves to ensure maximal viral gene expression and to evade host immune response. The sequence is that of Gag-Pro polyprotein (gag-pro) from Human T-cell leukemia virus 3 (strain Pyl43) (HTLV-3).